The following is a 288-amino-acid chain: Nickel/cobalt efflux system RcnA (288 aa).

The Periplasmic portion of the chain corresponds to 1–12 (MGEFSTLLQQGN). The helical transmembrane segment at 13 to 33 (AWFFIPSAILLGVLHGLEPGH) threads the bilayer. Residues 34–51 (SKTMMAAFIIAIKGTIKQ) are Cytoplasmic-facing. The chain crosses the membrane as a helical span at residues 52-72 (AVMLGLAATLSHTAVVWLIAL). Over 73–85 (GGMYVSRAFTAES) the chain is Periplasmic. Residues 86–106 (VEPWLQLVSAIIILSTAFWMF) traverse the membrane as a helical segment. Residues 107–188 (WRTWKGERDG…FHDREVTNGQ (82 aa)) lie on the Cytoplasmic side of the membrane. Residues 125 to 137 (THHHHDHEHHHHD) show a composition bias toward basic residues. A disordered region spans residues 125–144 (THHHHDHEHHHHDHDHDHHH). Residues 189–209 (ILLFGLTGGLIPCPAAITVLL) form a helical membrane-spanning segment. Over 210 to 223 (ICIQLKAFTLGATM) the chain is Periplasmic. The helical transmembrane segment at 224-244 (VLCFSIGLALTLVAVGVGAAI) threads the bilayer. Residues 245-266 (SVQQAAKRWSGFNTLARKAPYF) are Cytoplasmic-facing. Residues 267-287 (SSILIGLVGLYMGMHGYLGII) form a helical membrane-spanning segment. Arg288 is a topological domain (periplasmic).

The protein belongs to the NiCoT transporter (TC 2.A.52) family. RcnA subfamily.

Its subcellular location is the cell inner membrane. Efflux system for nickel and cobalt. In Citrobacter koseri (strain ATCC BAA-895 / CDC 4225-83 / SGSC4696), this protein is Nickel/cobalt efflux system RcnA (rcnA).